We begin with the raw amino-acid sequence, 940 residues long: Translation initiation factor IF-2 (940 aa).

2 stretches are compositionally biased toward low complexity: residues 138–147 and 161–208; these read APVEVVAEPE and PVVV…ITEL. Residues 138–354 form a disordered region; it reads APVEVVAEPE…DRQTFQAPTE (217 aa). Basic and acidic residues-rich tracts occupy residues 214–271 and 289–311; these read IAAR…EEAA and AKAD…DGAK. The tr-type G domain occupies 440 to 609; the sequence is PRAPVVTVMG…LLQAEVLELT (170 aa). Positions 449–456 are G1; the sequence is GHVDHGKT. A GTP-binding site is contributed by 449–456; it reads GHVDHGKT. The interval 474 to 478 is G2; sequence GITQH. The segment at 495–498 is G3; the sequence is DTPG. GTP is bound by residues 495-499 and 549-552; these read DTPGH and TKID. Residues 549–552 are G4; the sequence is TKID. The interval 585-587 is G5; that stretch reads SAK.

It belongs to the TRAFAC class translation factor GTPase superfamily. Classic translation factor GTPase family. IF-2 subfamily.

It localises to the cytoplasm. In terms of biological role, one of the essential components for the initiation of protein synthesis. Protects formylmethionyl-tRNA from spontaneous hydrolysis and promotes its binding to the 30S ribosomal subunits. Also involved in the hydrolysis of GTP during the formation of the 70S ribosomal complex. The protein is Translation initiation factor IF-2 of Azoarcus sp. (strain BH72).